A 162-amino-acid chain; its full sequence is Caveolin-2 (162 aa).

Over 1–86 (MGLETEKADV…FEISKYVMYK (86 aa)) the chain is Cytoplasmic. At Tyr19 the chain carries Phosphotyrosine; by SRC. Ser20 and Ser23 each carry phosphoserine. Tyr27 bears the Phosphotyrosine; by SRC mark. Phosphoserine is present on Ser36. Positions 87–107 (FLTVFLAIPLAFLAGILFATL) form an intramembrane region, helical. Residues 108-162 (SCLHIWIIMPFVKTCLMVLPSVQTIWKSVTDAIIAPLCTSIGRSFSSVSLQLSQD) lie on the Cytoplasmic side of the membrane.

It belongs to the caveolin family. Monomer or homodimer. Interacts with CAV1; the interaction forms a stable heterooligomeric complex that is required for targeting to lipid rafts and for caveolae formation. Tyrosine phosphorylated forms do not form heterooligomers with the Tyr-19-phosphorylated form existing as a monomer or dimer, and the Tyr-27-form as a monomer only. Interacts (tyrosine phosphorylated form) with the SH2 domain-containing proteins, RASA1, NCK1 and SRC. Interacts (tyrosine phosphorylated form) with INSR, the interaction (Tyr-27-phosphorylated form) is increased on insulin stimulation. Interacts (Tyr-19 phosphorylated form) with MAPK1 (phosphorylated form); the interaction, promoted by insulin, leads to nuclear location and MAPK1 activation. Interacts with STAT3; the interaction is increased on insulin-induced tyrosine phosphorylation leading to STAT activation. Phosphorylated on serine and tyrosine residues. CAV1 promotes phosphorylation on Ser-23 which then targets the complex to the plasma membrane, lipid rafts and caveolae. Phosphorylation on Ser-36 appears to modulate mitosis in endothelial cells. Phosphorylation on both Tyr-19 and Tyr-27 is required for insulin-induced 'Ser-727' phosphorylation of STAT3 and its activation. Phosphorylation on Tyr-19 is required for insulin-induced phosphorylation of MAPK1 and DNA binding of STAT3. Tyrosine phosphorylation is induced by both EGF and insulin (By. similarity).

It is found in the nucleus. It localises to the cytoplasm. The protein resides in the golgi apparatus membrane. The protein localises to the cell membrane. Its subcellular location is the membrane. It is found in the caveola. Its function is as follows. May act as a scaffolding protein within caveolar membranes. Interacts directly with G-protein alpha subunits and can functionally regulate their activity. Acts as an accessory protein in conjunction with CAV1 in targeting to lipid rafts and driving caveolae formation. The Ser-36 phosphorylated form has a role in modulating mitosis in endothelial cells. Positive regulator of cellular mitogenesis of the MAPK signaling pathway. Required for the insulin-stimulated nuclear translocation and activation of MAPK1 and STAT3, and the subsequent regulation of cell cycle progression. The polypeptide is Caveolin-2 (CAV2) (Callithrix jacchus (White-tufted-ear marmoset)).